The sequence spans 351 residues: Increased glyphosate resistance protein (351 aa).

The span at Met1–Ser18 shows a compositional bias: basic and acidic residues. The tract at residues Met1–Pro29 is disordered.

Its function is as follows. Confers an increase in glyphosate resistance when expressed in E.coli. This is Increased glyphosate resistance protein from Pseudomonas sp. (strain PG2982).